The primary structure comprises 576 residues: SNF1-like protein kinase ssp2 (576 aa).

The Protein kinase domain maps to 34 to 285 (YIIRETLGEG…IQEIRRDPWF (252 aa)). Residues 40 to 48 (LGEGSFGKV) and Lys-63 each bind ATP. Residue Asp-156 is the Proton acceptor of the active site. Phosphothreonine is present on Thr-189. Positions 292-348 (YLRPMEEVQGSYADSRIVSKLGEAMGFSEDYIVEALRSDENNEVKEAYNLLHENQVI) are auto-inhibitory domain (AID). The UBA domain maps to 304-345 (ADSRIVSKLGEAMGFSEDYIVEALRSDENNEVKEAYNLLHEN). Ser-442 carries the phosphoserine modification.

Belongs to the protein kinase superfamily. CAMK Ser/Thr protein kinase family. SNF1 subfamily. As to quaternary structure, component of the AMP-activated protein kinase complex also known as the SNF1 kinase complex (Snf1c), a heterotrimeric complex composed of a catalytic subunit alpha and 2 regulatory subunits beta (amk2) and gamma (cbs2). In terms of processing, phosphorylation at Thr-189 by ssp1 is required for nuclear entry in nutritionally stressed cells.

Its subcellular location is the cytoplasm. The protein localises to the nucleus. The enzyme catalyses L-seryl-[protein] + ATP = O-phospho-L-seryl-[protein] + ADP + H(+). The catalysed reaction is L-threonyl-[protein] + ATP = O-phospho-L-threonyl-[protein] + ADP + H(+). In terms of biological role, serine/threonine protein kinase essential for release from glucose repression via the phosphorylation of scr1 upon glucose deprivation. Catalytic subunit of the AMP-activated protein kinase complex also known as the SNF1 kinase complex (Snf1c), a central regulator of cellular energy homeostasis, which, in response to a fall in intracellular ATP levels, activates energy-producing pathways and inhibits energy-consuming processes. The complex phosphorylates histone H3 to form H3S10ph, which promotes H3K14ac formation, leading to transcriptional activation through TBP recruitment to the promoters. Regulates proper cell cycle exit and sexual differentiation. Also regulates ste11 levels under nitrogen deprivation. The polypeptide is SNF1-like protein kinase ssp2 (Schizosaccharomyces pombe (strain 972 / ATCC 24843) (Fission yeast)).